The following is a 507-amino-acid chain: Transposase for insertion sequences IS1326/IS1353 (507 aa).

The HTH IS21-type domain maps to 6-68 (ILSAIRRWHF…PFEPKLRQWL (63 aa)). The H-T-H motif DNA-binding region spans 19–40 (ASIREIARRSGLSRNTVRKYLQ). The region spanning 122–302 (GCFIPLRFAC…TVQEAFADEQ (181 aa)) is the Integrase catalytic domain.

This sequence belongs to the transposase IS21/IS408/IS1162 family.

Functionally, required for the transposition of the insertion element. This is Transposase for insertion sequences IS1326/IS1353 (istA) from Pseudomonas aeruginosa.